A 103-amino-acid polypeptide reads, in one-letter code: Protamine-2 (103 aa).

The segment at methionine 1–tyrosine 103 is disordered. Serine 8 and serine 10 each carry phosphoserine. Residues serine 8–histidine 17 are compositionally biased toward basic and acidic residues. Low complexity predominate over residues glycine 23–glycine 35. Position 37 is a phosphoserine (serine 37). The segment covering glutamate 39–histidine 48 has biased composition (basic and acidic residues). The span at tyrosine 51–tyrosine 103 shows a compositional bias: basic residues.

The protein belongs to the protamine P2 family. In terms of assembly, interacts with TDRP. Proteolytic processing into mature chains is required for histone eviction during spermatogenesis. Transition proteins (TNP1 and TNP2) are required for processing. In terms of tissue distribution, testis.

Its subcellular location is the nucleus. The protein resides in the chromosome. Functionally, protamines substitute for histones in the chromatin of sperm during the haploid phase of spermatogenesis. They compact sperm DNA into a highly condensed, stable and inactive complex. In Semnopithecus entellus (Northern plains gray langur), this protein is Protamine-2 (PRM2).